The primary structure comprises 329 residues: MLSLESEVLTRHLPLFANKSILLFGDVRDRFADQIKANAKSVAVFSSYFDYARQYADVSFGLYCEIKAELAVFYWTKNKQECQYQLLQWLSQVDVGQEMLIIGENRAGVRSVEKLLEPYGNIAKIDSARRCGLYHFELQSVPDFDGKKFWKSYRLQDLNIFALPAVFSSAELDDGTQLLLSTFNKADRLKGKVLDLGCGAGVIGASLKQQFEKIKLTMSDIHAMALESSRRTLAENALDGTVVASDVFSNIEERFDLIVSNPPFHDGIDTAYRAVEDLIAQAKQRLNRGGELRIVANAFLPYPDLLDKAFGSHQVIAKSNKFKVYSAKA.

Belongs to the methyltransferase superfamily. RsmC family. As to quaternary structure, monomer.

The protein resides in the cytoplasm. The catalysed reaction is guanosine(1207) in 16S rRNA + S-adenosyl-L-methionine = N(2)-methylguanosine(1207) in 16S rRNA + S-adenosyl-L-homocysteine + H(+). Functionally, specifically methylates the guanine in position 1207 of 16S rRNA in the 30S particle. The polypeptide is Ribosomal RNA small subunit methyltransferase C (Actinobacillus pleuropneumoniae serotype 7 (strain AP76)).